Consider the following 525-residue polypeptide: DNA polymerase epsilon subunit 2 (525 aa).

It belongs to the DNA polymerase epsilon subunit B family. Component of the epsilon DNA polymerase complex consisting of four subunits: the catalytic subunit PolE1/DNApol-epsilon255 and the accessory subunits PolE2/DNApol-epsilon58, Chrac-14/DNApolE3 and PolE4.

The protein localises to the nucleus. Accessory component of the DNA polymerase epsilon complex. Participates in DNA repair and in chromosomal DNA replication. Has a role in the entrance and progression through S phase. Has a role in endoreplication. Essential for viability and tissue development. This is DNA polymerase epsilon subunit 2 from Drosophila melanogaster (Fruit fly).